The sequence spans 275 residues: MPKVFLVKRRSLGVSVRSWDELPDEKRADTYIPVGLGRLLHDPPEDCRSDGGSSSGSGSSSAGEPGGAESSSSPHAPESETPEPGDAEGPDGHLATKQRPVARSKIKFTTGTCSDSVVHSCDLCGKGFRLQRMLNRHLKCHNQVKRHLCTFCGKGFNDTFDLKRHVRTHTGIRPYKCNVCNKAFTQRCSLESHLKKIHGVQQQYAYKQRRDKLYVCEDCGYTGPTQEDLYLHVNSAHPGSSFLKKTSKKLAALLQGKLTSAHQENTSLSEEEERK.

Residues 15 to 101 (SVRSWDELPD…GHLATKQRPV (87 aa)) are disordered. Basic and acidic residues-rich tracts occupy residues 18 to 29 (SWDELPDEKRAD) and 39 to 49 (LLHDPPEDCRS). Residues 56–76 (GSGSSSAGEPGGAESSSSPHA) are compositionally biased toward low complexity. Acidic residues predominate over residues 80-89 (ETPEPGDAEG). C2H2-type zinc fingers lie at residues 119–141 (HSCD…LKCH), 147–169 (HLCT…VRTH), 175–198 (YKCN…KKIH), and 214–237 (YVCE…NSAH). Serine 269 carries the phosphoserine modification.

This sequence belongs to the krueppel C2H2-type zinc-finger protein family. In terms of assembly, interacts (via zinc-finger domains) with CEBPA (via bZIP domain); the interaction inhibits the transcription factor activity of CEBPA and is required to repress adipogenesis. Expressed in testis, ovary, heart and skeletal muscle. Expressed in the cornea, but absent from the corneal endothelium.

The protein resides in the nucleus. Zinc-finger transcription repressor factor. Plays a critical role in maintaining the identity of epithelial lineages by suppressing epithelial-to mesenchymal transition (EMT) mainly through the repression of ZEB1, an EMT inducer. Positively regulates neuronal differentiation. Suppresses cell cycling and terminal differentiation of keratinocytes by directly repressing MYC and NOTCH1. Important for the correct development of primordial germ cells in embryos. Plays dual functions in thermogenesis and adipogenesis to maintain energy balance. Essential for brown/beige adipose tissue-mediated thermogenesis, is necessary for the development of brown adipocytes. In white adipose tissues, limits adipogenesis by blocking CEBPA binding to its transcriptional targets and inhibiting its transcription factor activity. In Homo sapiens (Human), this protein is Transcription factor Ovo-like 2.